The sequence spans 131 residues: Increased copper sensitivity protein 3 (131 aa).

Transmembrane regions (helical) follow at residues Ile-35–Ser-55 and Ile-74–Phe-94.

Its subcellular location is the membrane. The sequence is that of Increased copper sensitivity protein 3 (ICS3) from Saccharomyces cerevisiae (strain ATCC 204508 / S288c) (Baker's yeast).